A 302-amino-acid polypeptide reads, in one-letter code: Succinate--CoA ligase [ADP-forming] subunit alpha (302 aa).

CoA contacts are provided by residues 17 to 20 (TGST), Lys43, and 96 to 98 (ITE). Tyr159 contributes to the substrate binding site. His247 (tele-phosphohistidine intermediate) is an active-site residue.

Belongs to the succinate/malate CoA ligase alpha subunit family. In terms of assembly, heterotetramer of two alpha and two beta subunits.

It carries out the reaction succinate + ATP + CoA = succinyl-CoA + ADP + phosphate. The catalysed reaction is GTP + succinate + CoA = succinyl-CoA + GDP + phosphate. Its pathway is carbohydrate metabolism; tricarboxylic acid cycle; succinate from succinyl-CoA (ligase route): step 1/1. Its function is as follows. Succinyl-CoA synthetase functions in the citric acid cycle (TCA), coupling the hydrolysis of succinyl-CoA to the synthesis of either ATP or GTP and thus represents the only step of substrate-level phosphorylation in the TCA. The alpha subunit of the enzyme binds the substrates coenzyme A and phosphate, while succinate binding and nucleotide specificity is provided by the beta subunit. The protein is Succinate--CoA ligase [ADP-forming] subunit alpha of Staphylococcus epidermidis (strain ATCC 35984 / DSM 28319 / BCRC 17069 / CCUG 31568 / BM 3577 / RP62A).